Consider the following 137-residue polypeptide: Profilin-3 (137 aa).

It belongs to the profilin family. Interacts with ACTRT3.

It localises to the cytoplasm. It is found in the cytoskeleton. The protein resides in the nucleus. Its function is as follows. Binds to actin and affects the structure of the cytoskeleton. Binds to poly-L-proline, phosphatidylinositol 3-phosphate (PtdIns(3)P), phosphatidylinositol 4,5-bisphosphate (PtdIns(4,5)P2) and phosphatidylinositol 4-phosphate (PtdIns(4)P). Slightly reduces actin polymerization. May be involved in spermatogenesis. This is Profilin-3 (PFN3) from Bos taurus (Bovine).